Here is a 161-residue protein sequence, read N- to C-terminus: General odorant-binding protein 2 (161 aa).

An N-terminal signal peptide occupies residues 1 to 20 (MVNRLILMVVVVFITDSVMG). Intrachain disulfides connect C39–C74, C70–C128, and C117–C137.

This sequence belongs to the PBP/GOBP family. Homodimer. As to expression, olfactory tissue; expressed by the glia-like support cells that ensheathe the sensory neurons and line the base of the sensillum lumen.

Present in the aqueous fluid surrounding olfactory sensory dendrites and are thought to aid in the capture and transport of hydrophobic odorants into and through this fluid. The sequence is that of General odorant-binding protein 2 (GOBP2) from Manduca sexta (Tobacco hawkmoth).